Reading from the N-terminus, the 457-residue chain is tRNA modification GTPase MnmE (457 aa).

Residues Arg24, Glu81, and Lys124 each contribute to the (6S)-5-formyl-5,6,7,8-tetrahydrofolate site. Residues 220–379 (GIQLVLAGAP…LKQKILHVVG (160 aa)) form the TrmE-type G domain. Asn230 provides a ligand contact to K(+). Residues 230-235 (NVGKSS), 249-255 (TPIAGTT), and 274-277 (DTAG) contribute to the GTP site. Ser234 is a binding site for Mg(2+). K(+)-binding residues include Thr249, Ile251, and Thr254. Residue Thr255 participates in Mg(2+) binding. Lys457 is a binding site for (6S)-5-formyl-5,6,7,8-tetrahydrofolate.

It belongs to the TRAFAC class TrmE-Era-EngA-EngB-Septin-like GTPase superfamily. TrmE GTPase family. Homodimer. Heterotetramer of two MnmE and two MnmG subunits. It depends on K(+) as a cofactor.

It localises to the cytoplasm. Functionally, exhibits a very high intrinsic GTPase hydrolysis rate. Involved in the addition of a carboxymethylaminomethyl (cmnm) group at the wobble position (U34) of certain tRNAs, forming tRNA-cmnm(5)s(2)U34. The protein is tRNA modification GTPase MnmE of Polynucleobacter asymbioticus (strain DSM 18221 / CIP 109841 / QLW-P1DMWA-1) (Polynucleobacter necessarius subsp. asymbioticus).